The following is a 364-amino-acid chain: Methylthioribose-1-phosphate isomerase (364 aa).

Asp-254 acts as the Proton donor in catalysis.

The protein belongs to the eIF-2B alpha/beta/delta subunits family. MtnA subfamily.

It is found in the cytoplasm. It localises to the nucleus. The catalysed reaction is 5-(methylsulfanyl)-alpha-D-ribose 1-phosphate = 5-(methylsulfanyl)-D-ribulose 1-phosphate. It functions in the pathway amino-acid biosynthesis; L-methionine biosynthesis via salvage pathway; L-methionine from S-methyl-5-thio-alpha-D-ribose 1-phosphate: step 1/6. Catalyzes the interconversion of methylthioribose-1-phosphate (MTR-1-P) into methylthioribulose-1-phosphate (MTRu-1-P). The polypeptide is Methylthioribose-1-phosphate isomerase (Drosophila ananassae (Fruit fly)).